We begin with the raw amino-acid sequence, 85 residues long: RNA-binding protein Hfq (85 aa).

The region spanning Asp9–Ile69 is the Sm domain.

The protein belongs to the Hfq family. As to quaternary structure, homohexamer.

In terms of biological role, RNA chaperone that binds small regulatory RNA (sRNAs) and mRNAs to facilitate mRNA translational regulation in response to envelope stress, environmental stress and changes in metabolite concentrations. Also binds with high specificity to tRNAs. In Leptospira interrogans serogroup Icterohaemorrhagiae serovar copenhageni (strain Fiocruz L1-130), this protein is RNA-binding protein Hfq.